The chain runs to 89 residues: Small ribosomal subunit protein uS14A (89 aa).

Belongs to the universal ribosomal protein uS14 family. In terms of assembly, part of the 30S ribosomal subunit. Contacts proteins S3 and S10.

Functionally, binds 16S rRNA, required for the assembly of 30S particles and may also be responsible for determining the conformation of the 16S rRNA at the A site. The protein is Small ribosomal subunit protein uS14A of Levilactobacillus brevis (strain ATCC 367 / BCRC 12310 / CIP 105137 / JCM 1170 / LMG 11437 / NCIMB 947 / NCTC 947) (Lactobacillus brevis).